A 461-amino-acid polypeptide reads, in one-letter code: tRNA modification GTPase MnmE (461 aa).

3 residues coordinate (6S)-5-formyl-5,6,7,8-tetrahydrofolate: Lys-32, Glu-89, and Lys-128. In terms of domain architecture, TrmE-type G spans 224–387 (GHALSIVGKP…LSQKISEFFP (164 aa)). Asn-234 provides a ligand contact to K(+). GTP-binding positions include 234–239 (NAGKSS), 253–259 (SDIKGTT), and 278–281 (DTAG). Residue Ser-238 coordinates Mg(2+). The K(+) site is built by Ser-253, Ile-255, and Thr-258. Thr-259 contributes to the Mg(2+) binding site. Lys-461 contacts (6S)-5-formyl-5,6,7,8-tetrahydrofolate.

Belongs to the TRAFAC class TrmE-Era-EngA-EngB-Septin-like GTPase superfamily. TrmE GTPase family. As to quaternary structure, homodimer. Heterotetramer of two MnmE and two MnmG subunits. K(+) is required as a cofactor.

The protein resides in the cytoplasm. In terms of biological role, exhibits a very high intrinsic GTPase hydrolysis rate. Involved in the addition of a carboxymethylaminomethyl (cmnm) group at the wobble position (U34) of certain tRNAs, forming tRNA-cmnm(5)s(2)U34. The protein is tRNA modification GTPase MnmE of Helicobacter pylori (strain J99 / ATCC 700824) (Campylobacter pylori J99).